The primary structure comprises 254 residues: NAD-dependent protein deacetylase 1 (254 aa).

The region spanning Val3–Met252 is the Deacetylase sirtuin-type domain. 8 residues coordinate NAD(+): Ala29, Thr33, Phe40, Arg41, Gln105, Val107, Asp108, and His123. Phe40 lines the nicotinamide pocket. Positions 107 and 108 each coordinate nicotinamide. His123 (proton acceptor) is an active-site residue. The Zn(2+) site is built by Cys131, Cys134, Cys154, and Cys157. NAD(+) contacts are provided by Thr195, Ser196, and Asn220.

This sequence belongs to the sirtuin family. Class U subfamily. Requires Zn(2+) as cofactor.

It is found in the cytoplasm. The catalysed reaction is N(6)-acetyl-L-lysyl-[protein] + NAD(+) + H2O = 2''-O-acetyl-ADP-D-ribose + nicotinamide + L-lysyl-[protein]. In terms of biological role, NAD-dependent protein deacetylase which modulates the activities of several enzymes which are inactive in their acetylated form. Deacetylates the N-terminal lysine residue of Alba, the major archaeal chromatin protein and that, in turn, increases Alba's DNA binding affinity, thereby repressing transcription. In Pyrobaculum aerophilum (strain ATCC 51768 / DSM 7523 / JCM 9630 / CIP 104966 / NBRC 100827 / IM2), this protein is NAD-dependent protein deacetylase 1.